The primary structure comprises 191 residues: MTHILRIDASARRDGSVSRDLTTQIVDLLGGEVTIRDLTTAIPQLDEAWIGANFTPADQRTAQQQETLSLSDTLVAEVQAADTLVIGLPIYNFGVPAALKAWVDQIARAGVTFQYTETGPKGLLEGKRAIVAVASGGTEAGSDIDFATGYMRHVLGFIGITDVTFVTADRLMVDPDAAHKTAQTQIEALAA.

FMN contacts are provided by residues Ser10 and 16–18 (SVS).

The protein belongs to the azoreductase type 1 family. In terms of assembly, homodimer. FMN serves as cofactor.

It carries out the reaction 2 a quinone + NADH + H(+) = 2 a 1,4-benzosemiquinone + NAD(+). The catalysed reaction is N,N-dimethyl-1,4-phenylenediamine + anthranilate + 2 NAD(+) = 2-(4-dimethylaminophenyl)diazenylbenzoate + 2 NADH + 2 H(+). Functionally, quinone reductase that provides resistance to thiol-specific stress caused by electrophilic quinones. Its function is as follows. Also exhibits azoreductase activity. Catalyzes the reductive cleavage of the azo bond in aromatic azo compounds to the corresponding amines. This chain is FMN-dependent NADH:quinone oxidoreductase 1, found in Jannaschia sp. (strain CCS1).